The following is a 408-amino-acid chain: Argininosuccinate synthase (408 aa).

Residues 10 to 18 (AYSGGLDTS) and alanine 37 contribute to the ATP site. Residues tyrosine 90 and serine 95 each contribute to the L-citrulline site. Glycine 120 lines the ATP pocket. L-aspartate-binding residues include threonine 122, asparagine 126, and aspartate 127. Asparagine 126 lines the L-citrulline pocket. L-citrulline-binding residues include arginine 130, serine 182, serine 191, glutamate 267, and tyrosine 279.

The protein belongs to the argininosuccinate synthase family. Type 1 subfamily. In terms of assembly, homotetramer.

The protein resides in the cytoplasm. The catalysed reaction is L-citrulline + L-aspartate + ATP = 2-(N(omega)-L-arginino)succinate + AMP + diphosphate + H(+). It participates in amino-acid biosynthesis; L-arginine biosynthesis; L-arginine from L-ornithine and carbamoyl phosphate: step 2/3. The protein is Argininosuccinate synthase of Paraburkholderia phytofirmans (strain DSM 17436 / LMG 22146 / PsJN) (Burkholderia phytofirmans).